Here is a 493-residue protein sequence, read N- to C-terminus: E3 ubiquitin-protein ligase Hakai (493 aa).

2 disordered regions span residues 1–20 (MDHN…LGGL) and 28–61 (IKLI…GDEE). Positions 7-16 (DLQGTNSSAS) are enriched in polar residues. The RING-type zinc finger occupies 109 to 149 (CDKCGLPIKMYGRMIPCKHVFCYDCAILHEKKGDKMCPGCN). Positions 148 to 206 (CNEPVQRIEQCVRGSLFMCSIVQGCKRTYLSQRDLQAHINHRHMRAGKPVTRPPLEPVH) are HYB domain. The C2H2-type zinc-finger motif lies at 164–190 (FMCSIVQGCKRTYLSQRDLQAHINHRH). The interval 253 to 493 (YNQPHEDIRP…DQARYRPYYQ (241 aa)) is disordered. Pro residues-rich tracts occupy residues 262–276 (PPPA…PPRP), 342–352 (APPPPPPPPIS), 372–389 (APPP…PPPG), and 399–412 (MNHP…PQHG). The segment covering 427–444 (NPNSLPQFSEDQGTLSPP) has biased composition (polar residues). Pro residues predominate over residues 459 to 469 (PRGPPPPPRMQ). Positions 470–480 (GPPAQAPLAGP) are enriched in low complexity.

Belongs to the Hakai family. In terms of assembly, homodimer. Interacts with tyrosine-phosphorylated SRC substrates. Component of the WMM complex, a N6-methyltransferase complex composed of a catalytic subcomplex, named MAC, and of an associated subcomplex, named MACOM. Component of the MACOM subcomplex.

Its subcellular location is the nucleus speckle. The protein resides in the nucleus. The protein localises to the nucleoplasm. The enzyme catalyses S-ubiquitinyl-[E2 ubiquitin-conjugating enzyme]-L-cysteine + [acceptor protein]-L-lysine = [E2 ubiquitin-conjugating enzyme]-L-cysteine + N(6)-ubiquitinyl-[acceptor protein]-L-lysine.. Its pathway is protein modification; protein ubiquitination. Its function is as follows. E3 ubiquitin-protein ligase that mediates ubiquitination of several tyrosine-phosphorylated Src substrates. Associated component of the WMM complex, a complex that mediates N6-methyladenosine (m6A) methylation of RNAs, a modification that plays a role in the efficiency of mRNA splicing and RNA processing. In Gallus gallus (Chicken), this protein is E3 ubiquitin-protein ligase Hakai.